We begin with the raw amino-acid sequence, 402 residues long: 4-hydroxy-3-methylbut-2-enyl diphosphate reductase (402 aa).

[4Fe-4S] cluster is bound at residue Cys66. His96 lines the (2E)-4-hydroxy-3-methylbut-2-enyl diphosphate pocket. Residue His96 coordinates dimethylallyl diphosphate. His96 contributes to the isopentenyl diphosphate binding site. Residue Cys157 coordinates [4Fe-4S] cluster. Residue His185 participates in (2E)-4-hydroxy-3-methylbut-2-enyl diphosphate binding. Residue His185 participates in dimethylallyl diphosphate binding. Residue His185 coordinates isopentenyl diphosphate. Catalysis depends on Glu187, which acts as the Proton donor. Position 250 (Thr250) interacts with (2E)-4-hydroxy-3-methylbut-2-enyl diphosphate. Cys288 contacts [4Fe-4S] cluster. (2E)-4-hydroxy-3-methylbut-2-enyl diphosphate contacts are provided by Ser317, Ser318, Asn319, and Ser379. Residues Ser317, Ser318, Asn319, and Ser379 each coordinate dimethylallyl diphosphate. Residues Ser317, Ser318, Asn319, and Ser379 each coordinate isopentenyl diphosphate.

It belongs to the IspH family. It depends on [4Fe-4S] cluster as a cofactor.

It catalyses the reaction isopentenyl diphosphate + 2 oxidized [2Fe-2S]-[ferredoxin] + H2O = (2E)-4-hydroxy-3-methylbut-2-enyl diphosphate + 2 reduced [2Fe-2S]-[ferredoxin] + 2 H(+). The enzyme catalyses dimethylallyl diphosphate + 2 oxidized [2Fe-2S]-[ferredoxin] + H2O = (2E)-4-hydroxy-3-methylbut-2-enyl diphosphate + 2 reduced [2Fe-2S]-[ferredoxin] + 2 H(+). It functions in the pathway isoprenoid biosynthesis; dimethylallyl diphosphate biosynthesis; dimethylallyl diphosphate from (2E)-4-hydroxy-3-methylbutenyl diphosphate: step 1/1. Its pathway is isoprenoid biosynthesis; isopentenyl diphosphate biosynthesis via DXP pathway; isopentenyl diphosphate from 1-deoxy-D-xylulose 5-phosphate: step 6/6. Catalyzes the conversion of 1-hydroxy-2-methyl-2-(E)-butenyl 4-diphosphate (HMBPP) into a mixture of isopentenyl diphosphate (IPP) and dimethylallyl diphosphate (DMAPP). Acts in the terminal step of the DOXP/MEP pathway for isoprenoid precursor biosynthesis. This is 4-hydroxy-3-methylbut-2-enyl diphosphate reductase from Trichormus variabilis (strain ATCC 29413 / PCC 7937) (Anabaena variabilis).